A 467-amino-acid polypeptide reads, in one-letter code: Uronate isomerase (467 aa).

The protein belongs to the metallo-dependent hydrolases superfamily. Uronate isomerase family.

The enzyme catalyses D-glucuronate = D-fructuronate. The catalysed reaction is aldehydo-D-galacturonate = keto-D-tagaturonate. The protein operates within carbohydrate metabolism; pentose and glucuronate interconversion. The polypeptide is Uronate isomerase (Histophilus somni (strain 2336) (Haemophilus somnus)).